A 124-amino-acid chain; its full sequence is UPF0292 protein AF_0905 (124 aa).

The 78-residue stretch at 21–98 (GWVVVVEGKK…IPDVEIKRKI (78 aa)) folds into the Toprim domain. Mg(2+)-binding residues include Glu-27, Asp-67, and Asp-69.

Belongs to the UPF0292 family. Mg(2+) serves as cofactor.

This chain is UPF0292 protein AF_0905, found in Archaeoglobus fulgidus (strain ATCC 49558 / DSM 4304 / JCM 9628 / NBRC 100126 / VC-16).